A 176-amino-acid polypeptide reads, in one-letter code: Disulfide bond formation protein B (176 aa).

Topologically, residues Met-1–Ala-14 are cytoplasmic. The chain crosses the membrane as a helical span at residues Trp-15 to Trp-31. Over Phe-32–Cys-49 the chain is Periplasmic. Cysteines 41 and 44 form a disulfide. A helical transmembrane segment spans residues Ala-50–Pro-65. Residues Lys-66–Tyr-71 lie on the Cytoplasmic side of the membrane. A helical transmembrane segment spans residues Val-72–Tyr-89. Over Glu-90–Gln-144 the chain is Periplasmic. A disulfide bond links Cys-104 and Cys-130. Residues Trp-145–Ser-163 form a helical membrane-spanning segment. The Cytoplasmic segment spans residues Gln-164–Arg-176.

This sequence belongs to the DsbB family.

The protein resides in the cell inner membrane. In terms of biological role, required for disulfide bond formation in some periplasmic proteins such as PhoA or OmpA. Acts by oxidizing the DsbA protein. This Shigella flexneri protein is Disulfide bond formation protein B.